The primary structure comprises 95 residues: Large ribosomal subunit protein bL25 (95 aa).

The protein belongs to the bacterial ribosomal protein bL25 family. As to quaternary structure, part of the 50S ribosomal subunit; part of the 5S rRNA/L5/L18/L25 subcomplex. Contacts the 5S rRNA. Binds to the 5S rRNA independently of L5 and L18.

Its function is as follows. This is one of the proteins that binds to the 5S RNA in the ribosome where it forms part of the central protuberance. The polypeptide is Large ribosomal subunit protein bL25 (Haemophilus influenzae (strain 86-028NP)).